A 520-amino-acid chain; its full sequence is Acetylcholine receptor subunit delta (520 aa).

An N-terminal signal peptide occupies residues 1–24 (MAGPVLTLGLLAALVVCALPGSWG). Topologically, residues 25–248 (LNEEQRLIQH…VTFYLIIRRK (224 aa)) are extracellular. N-linked (GlcNAc...) asparagine glycosylation is found at asparagine 100, asparagine 167, and asparagine 193. A disulfide bond links cysteine 154 and cysteine 168. Helical transmembrane passes span 249–273 (PLFY…VFYL), 281–299 (TSVA…LLIS), and 315–336 (FLLF…VLNI). Topologically, residues 337 to 474 (HFRTPSTHVL…WNQVARTVDR (138 aa)) are cytoplasmic. Tyrosine 393 carries the post-translational modification Phosphotyrosine; by Tyr-kinases. Residues 475–493 (LCLFVVTPVMVVGTAWIFL) form a helical membrane-spanning segment.

This sequence belongs to the ligand-gated ion channel (TC 1.A.9) family. Acetylcholine receptor (TC 1.A.9.1) subfamily. Delta/CHRND sub-subfamily. As to quaternary structure, pentamer of two alpha chains, and one each of the beta, delta, and gamma (in immature muscle) or epsilon (in mature muscle) chains. The muscle heteropentamer composed of alpha-1, beta-1, delta, epsilon subunits interacts with the alpha-conotoxin ImII.

The protein resides in the postsynaptic cell membrane. It localises to the cell membrane. It carries out the reaction K(+)(in) = K(+)(out). The enzyme catalyses Na(+)(in) = Na(+)(out). In terms of biological role, after binding acetylcholine, the AChR responds by an extensive change in conformation that affects all subunits and leads to opening of an ion-conducting channel across the plasma membrane. The chain is Acetylcholine receptor subunit delta (Chrnd) from Mus musculus (Mouse).